Here is a 370-residue protein sequence, read N- to C-terminus: Peridinin-chlorophyll a-binding protein 1, chloroplastic (370 aa).

A chloroplast-targeting transit peptide spans 1–57 (MVRSGKKAVVLAAVAFCATSVVQKSHGFVPSPLRQRAAAAGAAAASAATMFAPAAFA). 2 tandem repeats follow at residues 58 to 220 (DEIG…VPSG) and 221 to 370 (DKIG…AAQR).

As to quaternary structure, homotrimer.

Its subcellular location is the plastid. The protein resides in the chloroplast. Functionally, water-soluble antenna for capture of solar energy in the blue-green range. Peridinin is an asymmetric carotenoid. The protein is Peridinin-chlorophyll a-binding protein 1, chloroplastic of Amphidinium carterae (Dinoflagellate).